The chain runs to 809 residues: Sucrose synthase 4 (809 aa).

The GT-B glycosyltransferase stretch occupies residues 275–753 (MIFNVVVVSP…GLQRIYEKYT (479 aa)).

This sequence belongs to the glycosyltransferase 1 family. Plant sucrose synthase subfamily. Predominantly expressed in the leaf tissues and in caryopses.

It carries out the reaction an NDP-alpha-D-glucose + D-fructose = a ribonucleoside 5'-diphosphate + sucrose + H(+). In terms of biological role, sucrose-cleaving enzyme that provides UDP-glucose and fructose for various metabolic pathways. In Oryza sativa subsp. japonica (Rice), this protein is Sucrose synthase 4 (SUS4).